The sequence spans 410 residues: Multifunctional CCA protein (410 aa).

ATP contacts are provided by Gly-8 and Arg-11. 2 residues coordinate CTP: Gly-8 and Arg-11. Asp-21 and Asp-23 together coordinate Mg(2+). The ATP site is built by Arg-91, Arg-137, and Arg-140. Residues Arg-91, Arg-137, and Arg-140 each contribute to the CTP site. The 102-residue stretch at 225-326 (SGIHTLMTLQ…LNVLKKTDAF (102 aa)) folds into the HD domain.

It belongs to the tRNA nucleotidyltransferase/poly(A) polymerase family. Bacterial CCA-adding enzyme type 1 subfamily. Monomer. Can also form homodimers and oligomers. Requires Mg(2+) as cofactor. It depends on Ni(2+) as a cofactor.

It catalyses the reaction a tRNA precursor + 2 CTP + ATP = a tRNA with a 3' CCA end + 3 diphosphate. It carries out the reaction a tRNA with a 3' CCA end + 2 CTP + ATP = a tRNA with a 3' CCACCA end + 3 diphosphate. Catalyzes the addition and repair of the essential 3'-terminal CCA sequence in tRNAs without using a nucleic acid template. Adds these three nucleotides in the order of C, C, and A to the tRNA nucleotide-73, using CTP and ATP as substrates and producing inorganic pyrophosphate. tRNA 3'-terminal CCA addition is required both for tRNA processing and repair. Also involved in tRNA surveillance by mediating tandem CCA addition to generate a CCACCA at the 3' terminus of unstable tRNAs. While stable tRNAs receive only 3'-terminal CCA, unstable tRNAs are marked with CCACCA and rapidly degraded. The polypeptide is Multifunctional CCA protein (Neisseria gonorrhoeae (strain NCCP11945)).